A 183-amino-acid chain; its full sequence is Ribosome maturation factor RimM (183 aa).

A PRC barrel domain is found at aspartate 95–leucine 171.

The protein belongs to the RimM family. In terms of assembly, binds ribosomal protein uS19.

It localises to the cytoplasm. Its function is as follows. An accessory protein needed during the final step in the assembly of 30S ribosomal subunit, possibly for assembly of the head region. Essential for efficient processing of 16S rRNA. May be needed both before and after RbfA during the maturation of 16S rRNA. It has affinity for free ribosomal 30S subunits but not for 70S ribosomes. The sequence is that of Ribosome maturation factor RimM from Rhodococcus opacus (strain B4).